A 288-amino-acid polypeptide reads, in one-letter code: Ribosomal RNA small subunit methyltransferase A (288 aa).

6 residues coordinate S-adenosyl-L-methionine: Asn-37, Leu-39, Gly-64, Glu-86, Asp-112, and Asn-131.

The protein belongs to the class I-like SAM-binding methyltransferase superfamily. rRNA adenine N(6)-methyltransferase family. RsmA subfamily.

The protein localises to the cytoplasm. It catalyses the reaction adenosine(1518)/adenosine(1519) in 16S rRNA + 4 S-adenosyl-L-methionine = N(6)-dimethyladenosine(1518)/N(6)-dimethyladenosine(1519) in 16S rRNA + 4 S-adenosyl-L-homocysteine + 4 H(+). Functionally, specifically dimethylates two adjacent adenosines (A1518 and A1519) in the loop of a conserved hairpin near the 3'-end of 16S rRNA in the 30S particle. May play a critical role in biogenesis of 30S subunits. This is Ribosomal RNA small subunit methyltransferase A from Rhodospirillum rubrum (strain ATCC 11170 / ATH 1.1.1 / DSM 467 / LMG 4362 / NCIMB 8255 / S1).